The following is a 75-amino-acid chain: Kappa-conotoxin RIIIK (75 aa).

The signal sequence occupies residues 1–19; sequence MSKLGVLLTICLLLFPLTA. Positions 20 to 50 are excised as a propeptide; that stretch reads LPMDGDQPVDRLAERMQDNISSEQHTFFEKR. 4-hydroxyproline occurs at positions 52, 63, 65, and 71. 3 cysteine pairs are disulfide-bonded: Cys-54-Cys-67, Cys-55-Cys-72, and Cys-62-Cys-73. A Threonine amide modification is found at Thr-74.

This sequence belongs to the conotoxin M superfamily. In terms of tissue distribution, expressed by the venom duct.

The protein localises to the secreted. Kappa-conotoxins inhibits voltage-gated potassium channels (Kv). This synthetic toxin reversibly inhibits the insect potassium channel Shaker K+, the teleost homolog TSha1 and the mammalian Kv1.2/KCNA2 channel. Interacts with the pore region of the insect channel, in a state-dependent manner. Causes seizure when intracerebrovascularly injected into mice. Is also toxic when intrathecally injected into mice, but shows no visible effects by intraperitoneal injection. Shows protective effects on cardiac tissue when administered after an ischemic event. This Conus radiatus (Rayed cone) protein is Kappa-conotoxin RIIIK.